Consider the following 145-residue polypeptide: D-aminoacyl-tRNA deacylase (145 aa).

The short motif at 137–138 (GP) is the Gly-cisPro motif, important for rejection of L-amino acids element.

Belongs to the DTD family. In terms of assembly, homodimer.

The protein resides in the cytoplasm. The enzyme catalyses glycyl-tRNA(Ala) + H2O = tRNA(Ala) + glycine + H(+). It carries out the reaction a D-aminoacyl-tRNA + H2O = a tRNA + a D-alpha-amino acid + H(+). In terms of biological role, an aminoacyl-tRNA editing enzyme that deacylates mischarged D-aminoacyl-tRNAs. Also deacylates mischarged glycyl-tRNA(Ala), protecting cells against glycine mischarging by AlaRS. Acts via tRNA-based rather than protein-based catalysis; rejects L-amino acids rather than detecting D-amino acids in the active site. By recycling D-aminoacyl-tRNA to D-amino acids and free tRNA molecules, this enzyme counteracts the toxicity associated with the formation of D-aminoacyl-tRNA entities in vivo and helps enforce protein L-homochirality. The protein is D-aminoacyl-tRNA deacylase of Salmonella arizonae (strain ATCC BAA-731 / CDC346-86 / RSK2980).